We begin with the raw amino-acid sequence, 337 residues long: Thiazole synthase (337 aa).

A disordered region spans residues 1–41 (MSQHPLRPAGSRPGDSPPDGSCPDGLAGGGSAVGGGGGGEA). Over residues 10-25 (GSRPGDSPPDGSCPDG) the composition is skewed to low complexity. Residues 26-41 (LAGGGSAVGGGGGGEA) are compositionally biased toward gly residues. K144 acts as the Schiff-base intermediate with DXP in catalysis. 1-deoxy-D-xylulose 5-phosphate-binding positions include G205, 231-232 (AG), and 253-254 (NT). A disordered region spans residues 302-337 (FLGAHPSPASHPSPASPVPSVSRATSPAAVVGEASR). Residues 319–337 (VPSVSRATSPAAVVGEASR) show a composition bias toward low complexity.

Belongs to the ThiG family. As to quaternary structure, homotetramer. Forms heterodimers with either ThiH or ThiS.

The protein resides in the cytoplasm. The catalysed reaction is [ThiS sulfur-carrier protein]-C-terminal-Gly-aminoethanethioate + 2-iminoacetate + 1-deoxy-D-xylulose 5-phosphate = [ThiS sulfur-carrier protein]-C-terminal Gly-Gly + 2-[(2R,5Z)-2-carboxy-4-methylthiazol-5(2H)-ylidene]ethyl phosphate + 2 H2O + H(+). Its pathway is cofactor biosynthesis; thiamine diphosphate biosynthesis. In terms of biological role, catalyzes the rearrangement of 1-deoxy-D-xylulose 5-phosphate (DXP) to produce the thiazole phosphate moiety of thiamine. Sulfur is provided by the thiocarboxylate moiety of the carrier protein ThiS. In vitro, sulfur can be provided by H(2)S. This is Thiazole synthase from Frankia casuarinae (strain DSM 45818 / CECT 9043 / HFP020203 / CcI3).